A 37-amino-acid polypeptide reads, in one-letter code: Cytochrome b6-f complex subunit 5 (37 aa).

The chain crosses the membrane as a helical span at residues 5-25; sequence LLSGIVLGMITVSAFGLFVAA.

The protein belongs to the PetG family. In terms of assembly, the 4 large subunits of the cytochrome b6-f complex are cytochrome b6, subunit IV (17 kDa polypeptide, PetD), cytochrome f and the Rieske protein, while the 4 small subunits are PetG, PetL, PetM and PetN. The complex functions as a dimer.

It localises to the plastid. Its subcellular location is the chloroplast thylakoid membrane. Component of the cytochrome b6-f complex, which mediates electron transfer between photosystem II (PSII) and photosystem I (PSI), cyclic electron flow around PSI, and state transitions. PetG is required for either the stability or assembly of the cytochrome b6-f complex. This is Cytochrome b6-f complex subunit 5 from Thalassiosira pseudonana (Marine diatom).